We begin with the raw amino-acid sequence, 288 residues long: UDP-3-O-acyl-N-acetylglucosamine deacetylase (288 aa).

Positions 79, 236, and 240 each coordinate Zn(2+). His-263 acts as the Proton donor in catalysis.

This sequence belongs to the LpxC family. Zn(2+) serves as cofactor.

It carries out the reaction a UDP-3-O-[(3R)-3-hydroxyacyl]-N-acetyl-alpha-D-glucosamine + H2O = a UDP-3-O-[(3R)-3-hydroxyacyl]-alpha-D-glucosamine + acetate. The protein operates within glycolipid biosynthesis; lipid IV(A) biosynthesis; lipid IV(A) from (3R)-3-hydroxytetradecanoyl-[acyl-carrier-protein] and UDP-N-acetyl-alpha-D-glucosamine: step 2/6. Functionally, catalyzes the hydrolysis of UDP-3-O-myristoyl-N-acetylglucosamine to form UDP-3-O-myristoylglucosamine and acetate, the committed step in lipid A biosynthesis. This Rickettsia bellii (strain OSU 85-389) protein is UDP-3-O-acyl-N-acetylglucosamine deacetylase.